Here is a 426-residue protein sequence, read N- to C-terminus: 5-aminovalerate aminotransferase DavT (426 aa).

Pyridoxal 5'-phosphate contacts are provided by residues 112-113, Tyr139, and 240-243; these read GS and DEVQ. The residue at position 269 (Lys269) is an N6-(pyridoxal phosphate)lysine. A pyridoxal 5'-phosphate-binding site is contributed by Thr298.

The protein belongs to the class-III pyridoxal-phosphate-dependent aminotransferase family. Pyridoxal 5'-phosphate is required as a cofactor.

It catalyses the reaction 5-aminopentanoate + 2-oxoglutarate = 5-oxopentanoate + L-glutamate. Functionally, catalyzes the conversion of 5-aminovalerate to 5-oxopentanoate. The chain is 5-aminovalerate aminotransferase DavT (davT) from Pseudomonas aeruginosa (strain ATCC 15692 / DSM 22644 / CIP 104116 / JCM 14847 / LMG 12228 / 1C / PRS 101 / PAO1).